The primary structure comprises 422 residues: p-hydroxyphenylacetate 3-hydroxylase, oxygenase component (422 aa).

Trp112 contacts FMN. Substrate-binding residues include His120 and Ser146. FMN is bound by residues 146 to 148 and 169 to 171; these read SSI and WSS. Position 263-266 (263-266) interacts with substrate; it reads RPYF. FMN is bound by residues Arg292, Tyr296, 374 to 375, and 396 to 397; these read AT and HA. Tyr296 contributes to the substrate binding site.

The protein belongs to the HpaH/HsaA monooxygenase family. In terms of assembly, homotetramer. The p-hydroxyphenylacetate 3-hydroxylase (HpaH) is composed of an oxygenase component C2 and a reductase component C1.

The enzyme catalyses 4-hydroxyphenylacetate + FMNH2 + O2 = 3,4-dihydroxyphenylacetate + FMN + H2O + H(+). It carries out the reaction 4-hydroxyphenylacetate + FADH2 + O2 = 3,4-dihydroxyphenylacetate + FAD + H2O + H(+). Its pathway is aromatic compound metabolism; 4-hydroxyphenylacetate degradation; pyruvate and succinate semialdehyde from 4-hydroxyphenylacetate: step 1/7. Inhibited by flavin concentrations greater than 15 uM. Also inhibited by excess p-hydroxyphenylacetate (HPA). Functionally, oxygenase component of a two-component system that utilizes reduced FMN (FMNH2) supplied by the reductase component to catalyze the hydroxylation of 4-hydroxyphenylacetic acid, leading to the production of 3,4-dihydroxyphenylacetate (3,4-DHPA). Also utilizes other reduced flavins such as FADH2 and reduced riboflavin to a lesser extent. Only the compounds with a hydroxyl group in the para (p-) position can be hydroxylated. May also oxidize phenol to catechol, and hydroxylate other phenol derivatives. This chain is p-hydroxyphenylacetate 3-hydroxylase, oxygenase component, found in Acinetobacter baumannii.